The chain runs to 334 residues: Sucrose operon repressor (334 aa).

The region spanning 6–63 (VTIKDIAELAGVSKATASLVLNGRGKELRVAQETRERVLAIAREQHYQPSIHARSLRD) is the HTH lacI-type domain. Residues 8-27 (IKDIAELAGVSKATASLVLN) constitute a DNA-binding region (H-T-H motif).

Functionally, repressor for the scr operon. Binds D-fructose as an inducer. The sequence is that of Sucrose operon repressor (scrR) from Klebsiella pneumoniae.